The sequence spans 298 residues: N-acetylmuramic acid 6-phosphate etherase (298 aa).

The 164-residue stretch at 55 to 218 (IHTQVSGGGR…STGLMIKSGK (164 aa)) folds into the SIS domain. The Proton donor role is filled by glutamate 83. Glutamate 114 is an active-site residue.

Belongs to the GCKR-like family. MurNAc-6-P etherase subfamily. In terms of assembly, homodimer.

It carries out the reaction N-acetyl-D-muramate 6-phosphate + H2O = N-acetyl-D-glucosamine 6-phosphate + (R)-lactate. Its pathway is amino-sugar metabolism; 1,6-anhydro-N-acetylmuramate degradation. The protein operates within amino-sugar metabolism; N-acetylmuramate degradation. It functions in the pathway cell wall biogenesis; peptidoglycan recycling. Functionally, specifically catalyzes the cleavage of the D-lactyl ether substituent of MurNAc 6-phosphate, producing GlcNAc 6-phosphate and D-lactate. Together with AnmK, is also required for the utilization of anhydro-N-acetylmuramic acid (anhMurNAc) either imported from the medium or derived from its own cell wall murein, and thus plays a role in cell wall recycling. This chain is N-acetylmuramic acid 6-phosphate etherase, found in Escherichia coli O1:K1 / APEC.